A 347-amino-acid chain; its full sequence is NADH-ubiquinone oxidoreductase chain 2 (347 aa).

10 helical membrane passes run 3–23 (PPILIIIMATIMTGTMIVMLS), 25–45 (HWLLIWIGFEMNMLAIIPILM), 66–86 (ASMLLMMGVTINLLYSGQWVI), 111–131 (FHFWVPEVTQGITLMSGMILL), 149–169 (INTNLLMLMALTSVLVGGWGG), 178–198 (IMAYSSIAHMGWMAAIITYNP), 201–221 (MVLNLTLYILMTLSTFMLFML), 237–257 (FPLITSMILILMLSLGGLPPL), 274–294 (NMIIIPTLMAITALLNLYFYL), and 325–345 (LLPPLIITSTMLLPLTPMLSV).

Belongs to the complex I subunit 2 family. In terms of assembly, core subunit of respiratory chain NADH dehydrogenase (Complex I) which is composed of 45 different subunits. Interacts with TMEM242.

It is found in the mitochondrion inner membrane. It catalyses the reaction a ubiquinone + NADH + 5 H(+)(in) = a ubiquinol + NAD(+) + 4 H(+)(out). In terms of biological role, core subunit of the mitochondrial membrane respiratory chain NADH dehydrogenase (Complex I) which catalyzes electron transfer from NADH through the respiratory chain, using ubiquinone as an electron acceptor. Essential for the catalytic activity and assembly of complex I. The polypeptide is NADH-ubiquinone oxidoreductase chain 2 (Canis lupus familiaris (Dog)).